A 157-amino-acid polypeptide reads, in one-letter code: 2-C-methyl-D-erythritol 2,4-cyclodiphosphate synthase (157 aa).

A divalent metal cation is bound by residues aspartate 8 and histidine 10. Residues aspartate 8 to histidine 10 and histidine 34 to serine 35 contribute to the 4-CDP-2-C-methyl-D-erythritol 2-phosphate site. Histidine 42 serves as a coordination point for a divalent metal cation. 4-CDP-2-C-methyl-D-erythritol 2-phosphate is bound by residues aspartate 56–glycine 58, phenylalanine 61–aspartate 65, alanine 100–leucine 106, threonine 132–glutamate 135, phenylalanine 139, and arginine 142.

This sequence belongs to the IspF family. As to quaternary structure, homotrimer. A divalent metal cation is required as a cofactor.

The enzyme catalyses 4-CDP-2-C-methyl-D-erythritol 2-phosphate = 2-C-methyl-D-erythritol 2,4-cyclic diphosphate + CMP. It participates in isoprenoid biosynthesis; isopentenyl diphosphate biosynthesis via DXP pathway; isopentenyl diphosphate from 1-deoxy-D-xylulose 5-phosphate: step 4/6. Its function is as follows. Involved in the biosynthesis of isopentenyl diphosphate (IPP) and dimethylallyl diphosphate (DMAPP), two major building blocks of isoprenoid compounds. Catalyzes the conversion of 4-diphosphocytidyl-2-C-methyl-D-erythritol 2-phosphate (CDP-ME2P) to 2-C-methyl-D-erythritol 2,4-cyclodiphosphate (ME-CPP) with a corresponding release of cytidine 5-monophosphate (CMP). The protein is 2-C-methyl-D-erythritol 2,4-cyclodiphosphate synthase of Erwinia tasmaniensis (strain DSM 17950 / CFBP 7177 / CIP 109463 / NCPPB 4357 / Et1/99).